The primary structure comprises 223 residues: Regulator of G-protein signaling 19 (223 aa).

Positions 1–30 (MPTPPEAEKQQTGPEEADQPPSMSSHDAAP) are disordered. Residues 20–29 (PPSMSSHDAA) show a composition bias toward low complexity. Phosphoserine is present on residues Ser24 and Ser103. Residues 96–212 (SFDKLMHSPA…LSSPAYRALL (117 aa)) form the RGS domain. Residue Ser157 is modified to Phosphoserine; by MAPK1 and MAPK3. The interval 213–223 (LQGASQSSSEA) is interaction with GIPC.

Interacts with GIPC PDZ domain. Interacts with GNAO1. Fatty acylated. Heavily palmitoylated in the cysteine string motif. Post-translationally, phosphorylated, mainly on serine residues.

It is found in the membrane. Its function is as follows. Inhibits signal transduction by increasing the GTPase activity of G protein alpha subunits thereby driving them into their inactive GDP-bound form. Binds to G-alpha subfamily 1 members, with the order G(i)a3 &gt; G(i)a1 &gt; G(o)a &gt;&gt; G(z)a/G(i)a2. Activity on G(z)-alpha is inhibited by phosphorylation and palmitoylation of the G-protein. This chain is Regulator of G-protein signaling 19 (RGS19), found in Bos taurus (Bovine).